The primary structure comprises 204 residues: Proteasome subunit beta type-2-A (204 aa).

Methionine 1 bears the N-acetylmethionine mark.

The protein belongs to the peptidase T1B family. In terms of assembly, component of the 20S core complex of the 26S proteasome. The 26S proteasome is composed of a core protease (CP), known as the 20S proteasome, capped at one or both ends by the 19S regulatory particle (RP/PA700). The 20S proteasome core is composed of 28 subunits that are arranged in four stacked rings, resulting in a barrel-shaped structure. The two end rings are each formed by seven alpha subunits, and the two central rings are each formed by seven beta subunits. The catalytic chamber with the active sites is on the inside of the barrel.

It localises to the cytoplasm. Its subcellular location is the nucleus. Its function is as follows. Non-catalytic component of the proteasome, a multicatalytic proteinase complex which is characterized by its ability to cleave peptides with Arg, Phe, Tyr, Leu, and Glu adjacent to the leaving group at neutral or slightly basic pH. The proteasome has an ATP-dependent proteolytic activity. The polypeptide is Proteasome subunit beta type-2-A (PBD1) (Arabidopsis thaliana (Mouse-ear cress)).